Consider the following 165-residue polypeptide: Phosphopantetheine adenylyltransferase (165 aa).

T11 lines the substrate pocket. Residues 11-12 (TF) and H19 each bind ATP. Substrate-binding residues include K43, T79, and R93. ATP is bound by residues E104 and 128-134 (LEPLNST).

The protein belongs to the bacterial CoaD family. Homohexamer. It depends on Mg(2+) as a cofactor.

The protein localises to the cytoplasm. It carries out the reaction (R)-4'-phosphopantetheine + ATP + H(+) = 3'-dephospho-CoA + diphosphate. Its pathway is cofactor biosynthesis; coenzyme A biosynthesis; CoA from (R)-pantothenate: step 4/5. Its function is as follows. Reversibly transfers an adenylyl group from ATP to 4'-phosphopantetheine, yielding dephospho-CoA (dPCoA) and pyrophosphate. This chain is Phosphopantetheine adenylyltransferase, found in Lactococcus lactis subsp. lactis (strain IL1403) (Streptococcus lactis).